A 443-amino-acid chain; its full sequence is Ribosomal protein uS12 methylthiotransferase RimO (443 aa).

An MTTase N-terminal domain is found at 6–116; that stretch reads PRVGMISLGC…VVNAVHDVVP (111 aa). Residues Cys15, Cys51, Cys80, Cys149, Cys153, and Cys156 each contribute to the [4Fe-4S] cluster site. Positions 135-373 constitute a Radical SAM core domain; sequence LTPRHYAYLK…MAHQQAISAA (239 aa). In terms of domain architecture, TRAM spans 376–443; the sequence is QMKIGKEIEV…DEYDLWAEML (68 aa).

It belongs to the methylthiotransferase family. RimO subfamily. [4Fe-4S] cluster is required as a cofactor.

Its subcellular location is the cytoplasm. It carries out the reaction L-aspartate(89)-[ribosomal protein uS12]-hydrogen + (sulfur carrier)-SH + AH2 + 2 S-adenosyl-L-methionine = 3-methylsulfanyl-L-aspartate(89)-[ribosomal protein uS12]-hydrogen + (sulfur carrier)-H + 5'-deoxyadenosine + L-methionine + A + S-adenosyl-L-homocysteine + 2 H(+). Functionally, catalyzes the methylthiolation of an aspartic acid residue of ribosomal protein uS12. In Pseudomonas syringae pv. tomato (strain ATCC BAA-871 / DC3000), this protein is Ribosomal protein uS12 methylthiotransferase RimO.